The chain runs to 931 residues: Ribosome-releasing factor 2, mitochondrial (931 aa).

The region spanning glutamate 63–serine 379 is the tr-type G domain. Residues alanine 72–threonine 79, aspartate 162–histidine 166, and asparagine 216–aspartate 219 each bind GTP.

Belongs to the TRAFAC class translation factor GTPase superfamily. Classic translation factor GTPase family. EF-G/EF-2 subfamily.

It is found in the mitochondrion. Mitochondrial GTPase that mediates the disassembly of ribosomes from messenger RNA at the termination of mitochondrial protein biosynthesis. Not involved in the GTP-dependent ribosomal translocation step during translation elongation. The polypeptide is Ribosome-releasing factor 2, mitochondrial (mef2) (Talaromyces stipitatus (strain ATCC 10500 / CBS 375.48 / QM 6759 / NRRL 1006) (Penicillium stipitatum)).